The following is a 295-amino-acid chain: Large ribosomal subunit protein uL2 (295 aa).

The interval 243–295 (WRPHTRGTAMNPVDHPHGGGEGRTRGKHPESPWDGRRRDTRREGVRSTPISLS) is disordered. Basic and acidic residues predominate over residues 256–287 (DHPHGGGEGRTRGKHPESPWDGRRRDTRREGV).

This sequence belongs to the universal ribosomal protein uL2 family. In terms of assembly, part of the 50S ribosomal subunit. Forms a bridge to the 30S subunit in the 70S ribosome.

Functionally, one of the primary rRNA binding proteins. Required for association of the 30S and 50S subunits to form the 70S ribosome, for tRNA binding and peptide bond formation. It has been suggested to have peptidyltransferase activity; this is somewhat controversial. Makes several contacts with the 16S rRNA in the 70S ribosome. This Aquifex pyrophilus protein is Large ribosomal subunit protein uL2.